Consider the following 262-residue polypeptide: Putative hydro-lyase Mflv_5194 (262 aa).

This sequence belongs to the D-glutamate cyclase family.

The protein is Putative hydro-lyase Mflv_5194 of Mycolicibacterium gilvum (strain PYR-GCK) (Mycobacterium gilvum (strain PYR-GCK)).